The following is a 137-amino-acid chain: Peptide methionine sulfoxide reductase MsrB (137 aa).

In terms of domain architecture, MsrB spans A7 to E129. Zn(2+) is bound by residues C46, C49, C95, and C98. The active-site Nucleophile is C118.

Belongs to the MsrB Met sulfoxide reductase family. It depends on Zn(2+) as a cofactor.

The enzyme catalyses L-methionyl-[protein] + [thioredoxin]-disulfide + H2O = L-methionyl-(R)-S-oxide-[protein] + [thioredoxin]-dithiol. The protein is Peptide methionine sulfoxide reductase MsrB of Salmonella agona (strain SL483).